Reading from the N-terminus, the 440-residue chain is Gap junction alpha-8 protein (440 aa).

An intramembrane segment occupies 2–12 (GDWSFLGNILE). Topologically, residues 13-21 (EVNEHSTVI) are cytoplasmic. The chain crosses the membrane as a helical span at residues 22–42 (GRVWLTVLFIFRILILGTAAE). The Extracellular portion of the chain corresponds to 43–71 (FVWGDEQSDFVCNTQQPGCENVCYDEAFP). 3 disulfide bridges follow: Cys-54/Cys-201, Cys-61/Cys-195, and Cys-65/Cys-190. The helical transmembrane segment at 72 to 92 (ISHIRLWVLQIIFVSTPSLVY) threads the bilayer. Residues 93–161 (VGHAVHHVRM…GTLLRTYVCH (69 aa)) are Cytoplasmic-facing. The segment at 108–144 (EREAEELSQQSPGNGGERAPLAADQGSVKKSSSSSKG) is disordered. A helical membrane pass occupies residues 162-182 (IIFKTLFEVGFIVGHYFLYGF). Residues 183–210 (RILPLYRCSRWPCPNVVDCFVSRPTEKT) lie on the Extracellular side of the membrane. The chain crosses the membrane as a helical span at residues 211-231 (IFILFMLSVASVSLFLNILEM). Over 232–440 (SHLGLKKIRS…SRARSDDLTV (209 aa)) the chain is Cytoplasmic. The tract at residues 334–440 (GAQEGVEEEQ…SRARSDDLTV (107 aa)) is disordered. Composition is skewed to basic and acidic residues over residues 353–365 (VGDKSQEAERVST) and 375–405 (EEEKVEPPEVEKEAEKEETPPEKVSKQELTP). Residues 423–432 (LSRLSKASSR) are compositionally biased toward low complexity.

It belongs to the connexin family. Alpha-type (group II) subfamily. A hemichannel or connexon is composed of a hexamer of connexins. A functional gap junction is formed by the apposition of two hemichannels. Forms heteromeric channels with GJA3. In terms of tissue distribution, detected in eye lens (at protein level). Eye lens.

Its subcellular location is the cell membrane. The protein localises to the cell junction. The protein resides in the gap junction. In terms of biological role, structural component of eye lens gap junctions. Gap junctions are dodecameric channels that connect the cytoplasm of adjoining cells. They are formed by the docking of two hexameric hemichannels, one from each cell membrane. Small molecules and ions diffuse from one cell to a neighboring cell via the central pore. This chain is Gap junction alpha-8 protein (GJA8), found in Ovis aries (Sheep).